The chain runs to 696 residues: Polyribonucleotide nucleotidyltransferase (696 aa).

Mg(2+)-binding residues include aspartate 489 and aspartate 495. The KH domain occupies 556–615 (PQYVTMKINPEKIRDVIGKGGVVIREITEATNCAIDISDDGTIKIAAHTTEEGEAAKRRI). The S1 motif domain maps to 625–693 (GKVYEGTVVK…RQGRVRLSMK (69 aa)).

It belongs to the polyribonucleotide nucleotidyltransferase family. Component of the RNA degradosome, which is a multiprotein complex involved in RNA processing and mRNA degradation. Mg(2+) is required as a cofactor.

The protein resides in the cytoplasm. The enzyme catalyses RNA(n+1) + phosphate = RNA(n) + a ribonucleoside 5'-diphosphate. Involved in mRNA degradation. Catalyzes the phosphorolysis of single-stranded polyribonucleotides processively in the 3'- to 5'-direction. This is Polyribonucleotide nucleotidyltransferase from Coxiella burnetii (strain CbuK_Q154) (Coxiella burnetii (strain Q154)).